The sequence spans 486 residues: Cysteine--tRNA ligase (486 aa).

Cysteine 29 lines the Zn(2+) pocket. Positions 31–41 (ITVYDYCHLGH) match the 'HIGH' region motif. Zn(2+) is bound by residues cysteine 215, histidine 240, and glutamate 244. The 'KMSKS' region motif lies at 272-276 (KMSKS). Lysine 275 is an ATP binding site.

Belongs to the class-I aminoacyl-tRNA synthetase family. In terms of assembly, monomer. The cofactor is Zn(2+).

The protein resides in the cytoplasm. The enzyme catalyses tRNA(Cys) + L-cysteine + ATP = L-cysteinyl-tRNA(Cys) + AMP + diphosphate. The polypeptide is Cysteine--tRNA ligase (Gloeothece citriformis (strain PCC 7424) (Cyanothece sp. (strain PCC 7424))).